Reading from the N-terminus, the 1006-residue chain is MMVPSLSTSISSPALFKNREGGEEGNDGGLEQLQNQVNDLGDLNFNEEGDYNNDQQPTNEEEGTADNELESLMSLVNDNNNNNNNTSGIDDDNNNDIDDNNNNNNNNNNNNNNNNNNKEGLNDLFISSINVSTLLNDLDQLSDTHSHASVSNQSSNGSVRRGYDIKTQRSVGTKGQGGSSGSSPRSNSLRVYRTFPYRGDHHFSWLNNIRDVDSSEDPNSCHNSNNNNKNNKNNQPSSTHDQTNINNNNNNNCNDNEKPIKPNSTNGIRHSRKYKGLQQLDFLGSNIILPQQQQPQPIEDNQQVVPQPFQVDAESNYNNNNNNNNNNNNNNNNNNNNNNNNNNNNNNDNENNQHPINPVNTQNTQQNVTHSNNNNNNNNNNTAPPNQWSELIESLGYGSQSDEQKTFGSTLDDLNNANSCSDLKDLIVDGISINNETSPSQSQEITDFSKIDNLNKNININNNNNTDSQQPLPSIDVNFSHNNNNNNNDNDNNNNNNNNNNNNNNNNNNNNIQDIQIPYHQNDQDYNIQEGNDINNDNYEIRVSNNDDDNDSSNNNNNNNSKFQENLNLLNTGMGGRICKTDQKKQLSRTITFADPSSILSFFGSIPTDEDQNNNNNKNKNTTTTTTTTNTTTTTTTTTSASAAAQNKLDLLSSLSAGQSSGGVGGGNNVLNSSSTPAIKVNHQHKVTEQNRTSSKISLSTIFPKLPPFTNQQSPPTLSPSKYYYPLLQPEPTTLIRGFSSAADINKRGLKRAKKPMEMEDVYLTQYPLGDDQDSQIALFAIFDGHSGKGCAVAAKEIFPNILLKYIKSTKNENGGKPIYDMRGVFLNAFKEVDAQLSKFEYEGATATVCLVWRAGHQRFVQSANVGDSTAFLSYGNETLFLSKDHRATDPEEIQRIKNDGITLTEGQTRINGLMVSRALGDHFIKHLNCGLSGEPYVSPPISITPFHSHLIVASDGLWDVISGNRAMEIVKVQQTEEKMSNSLLQCAIGSIKAKDNISIIVVTLQ.

Polar residues predominate over residues 1–12; sequence MMVPSLSTSISS. Disordered stretches follow at residues 1–119, 146–188, 214–269, 312–387, 459–513, 525–563, and 604–642; these read MMVP…NNKE, SHAS…RSNS, SSED…NGIR, DAES…PPNQ, NINN…NNIQ, DYNIQEGNDINNDNYEIRVSNNDDDNDSSNNNNNNNSKF, and GSIPTDEDQNNNNNKNKNTTTTTTTTNTTTTTTTTTSAS. The span at 59 to 69 shows a compositional bias: acidic residues; sequence NEEEGTADNEL. Residues 65-122 adopt a coiled-coil conformation; it reads ADNELESLMSLVNDNNNNNNNTSGIDDDNNNDIDDNNNNNNNNNNNNNNNNNNKEGLN. A compositionally biased stretch (low complexity) spans 77–88; that stretch reads NDNNNNNNNTSG. Residues 89–99 are compositionally biased toward acidic residues; it reads IDDDNNNDIDD. Positions 100-117 are enriched in low complexity; the sequence is NNNNNNNNNNNNNNNNNN. Polar residues predominate over residues 146-158; it reads SHASVSNQSSNGS. Low complexity-rich tracts occupy residues 220 to 234, 244 to 254, and 316 to 387; these read SCHNSNNNNKNNKNN, NINNNNNNNCN, and NYNN…PPNQ. The stretch at 450-516 forms a coiled coil; it reads KIDNLNKNIN…NNNNNIQDIQ (67 aa). Polar residues predominate over residues 466–481; sequence TDSQQPLPSIDVNFSH. Positions 482–511 are enriched in low complexity; that stretch reads NNNNNNNDNDNNNNNNNNNNNNNNNNNNNN. Residues 525–538 are compositionally biased toward polar residues; sequence DYNIQEGNDINNDN. Composition is skewed to low complexity over residues 552 to 561 and 613 to 639; these read SSNNNNNNNS and NNNNNKNKNTTTTTTTTNTTTTTTTTT. Residues 744–1005 form the PPM-type phosphatase domain; it reads DINKRGLKRA…DNISIIVVTL (262 aa). Residues aspartate 784, glycine 785, aspartate 956, and aspartate 996 each contribute to the Mn(2+) site.

In the C-terminal section; belongs to the PP2C family. Requires Mg(2+) as cofactor. Mn(2+) serves as cofactor.

It carries out the reaction O-phospho-L-seryl-[protein] + H2O = L-seryl-[protein] + phosphate. The catalysed reaction is O-phospho-L-threonyl-[protein] + H2O = L-threonyl-[protein] + phosphate. The polypeptide is Probable protein phosphatase DDB_G0279461 (Dictyostelium discoideum (Social amoeba)).